Reading from the N-terminus, the 282-residue chain is 3-hydroxyanthranilate 3,4-dioxygenase (282 aa).

Residues 1–160 (MAMAINVKKW…SKQYKSGKPD (160 aa)) are domain A (catalytic). Position 43 (Arg43) interacts with O2. Fe cation is bound by residues His47, Glu53, and His91. Glu53 contacts substrate. Substrate contacts are provided by Arg95 and Glu105. Positions 161–177 (PDQPKAKMPFCLSTEQV) are linker. A domain B region spans residues 178–282 (MEPFSFQHWL…LSTSQVPLPM (105 aa)).

The protein belongs to the 3-HAO family. Monomer. It depends on Fe(2+) as a cofactor.

Its subcellular location is the cytoplasm. It is found in the cytosol. The catalysed reaction is 3-hydroxyanthranilate + O2 = (2Z,4Z)-2-amino-3-carboxymuconate 6-semialdehyde. Its pathway is cofactor biosynthesis; NAD(+) biosynthesis; quinolinate from L-kynurenine: step 3/3. Its function is as follows. Catalyzes the oxidative ring opening of 3-hydroxyanthranilate to 2-amino-3-carboxymuconate semialdehyde, which spontaneously cyclizes to quinolinate. This chain is 3-hydroxyanthranilate 3,4-dioxygenase (haao), found in Xenopus laevis (African clawed frog).